A 355-amino-acid chain; its full sequence is Peptide chain release factor 1 (355 aa).

An N5-methylglutamine modification is found at Gln233.

The protein belongs to the prokaryotic/mitochondrial release factor family. In terms of processing, methylated by PrmC. Methylation increases the termination efficiency of RF1.

The protein localises to the cytoplasm. Functionally, peptide chain release factor 1 directs the termination of translation in response to the peptide chain termination codons UAG and UAA. The protein is Peptide chain release factor 1 of Bacillus cereus (strain ATCC 14579 / DSM 31 / CCUG 7414 / JCM 2152 / NBRC 15305 / NCIMB 9373 / NCTC 2599 / NRRL B-3711).